We begin with the raw amino-acid sequence, 108 residues long: Large ribosomal subunit protein uL24 (108 aa).

The protein belongs to the universal ribosomal protein uL24 family. As to quaternary structure, part of the 50S ribosomal subunit.

In terms of biological role, one of two assembly initiator proteins, it binds directly to the 5'-end of the 23S rRNA, where it nucleates assembly of the 50S subunit. One of the proteins that surrounds the polypeptide exit tunnel on the outside of the subunit. In Desulfosudis oleivorans (strain DSM 6200 / JCM 39069 / Hxd3) (Desulfococcus oleovorans), this protein is Large ribosomal subunit protein uL24.